Here is a 237-residue protein sequence, read N- to C-terminus: Phosphoribosylaminoimidazole-succinocarboxamide synthase (237 aa).

It belongs to the SAICAR synthetase family.

The enzyme catalyses 5-amino-1-(5-phospho-D-ribosyl)imidazole-4-carboxylate + L-aspartate + ATP = (2S)-2-[5-amino-1-(5-phospho-beta-D-ribosyl)imidazole-4-carboxamido]succinate + ADP + phosphate + 2 H(+). It participates in purine metabolism; IMP biosynthesis via de novo pathway; 5-amino-1-(5-phospho-D-ribosyl)imidazole-4-carboxamide from 5-amino-1-(5-phospho-D-ribosyl)imidazole-4-carboxylate: step 1/2. In Enterobacter sp. (strain 638), this protein is Phosphoribosylaminoimidazole-succinocarboxamide synthase.